Here is a 189-residue protein sequence, read N- to C-terminus: Prophage DNA-packing protein NohA (189 aa).

The protein belongs to the terminase small subunit family.

The sequence is that of Prophage DNA-packing protein NohA (nohA) from Escherichia coli (strain K12).